A 51-amino-acid polypeptide reads, in one-letter code: Large ribosomal subunit protein eL39 (51 aa).

It belongs to the eukaryotic ribosomal protein eL39 family.

The polypeptide is Large ribosomal subunit protein eL39 (rpl39e) (Pyrobaculum aerophilum (strain ATCC 51768 / DSM 7523 / JCM 9630 / CIP 104966 / NBRC 100827 / IM2)).